The chain runs to 788 residues: Endonuclease MutS2 (788 aa).

335–342 contributes to the ATP binding site; the sequence is GPNTGGKT. The disordered stretch occupies residues 688 to 708; sequence VKSASKTKKRSGGTSITKQSA. The segment covering 699 to 708 has biased composition (polar residues); that stretch reads GGTSITKQSA. In terms of domain architecture, Smr spans 713 to 788; sequence LDLRGVRVEE…GHGVTIIELK (76 aa).

Belongs to the DNA mismatch repair MutS family. MutS2 subfamily. In terms of assembly, homodimer. Binds to stalled ribosomes, contacting rRNA.

Functionally, endonuclease that is involved in the suppression of homologous recombination and thus may have a key role in the control of bacterial genetic diversity. Its function is as follows. Acts as a ribosome collision sensor, splitting the ribosome into its 2 subunits. Detects stalled/collided 70S ribosomes which it binds and splits by an ATP-hydrolysis driven conformational change. Acts upstream of the ribosome quality control system (RQC), a ribosome-associated complex that mediates the extraction of incompletely synthesized nascent chains from stalled ribosomes and their subsequent degradation. Probably generates substrates for RQC. The polypeptide is Endonuclease MutS2 (Exiguobacterium sibiricum (strain DSM 17290 / CCUG 55495 / CIP 109462 / JCM 13490 / 255-15)).